An 89-amino-acid chain; its full sequence is Cell division topological specificity factor (89 aa).

It belongs to the MinE family.

Its function is as follows. Prevents the cell division inhibition by proteins MinC and MinD at internal division sites while permitting inhibition at polar sites. This ensures cell division at the proper site by restricting the formation of a division septum at the midpoint of the long axis of the cell. This Clostridium beijerinckii (strain ATCC 51743 / NCIMB 8052) (Clostridium acetobutylicum) protein is Cell division topological specificity factor.